The chain runs to 815 residues: Phosphatidylinositol 4-phosphate 5-kinase 9 (815 aa).

MORN repeat units lie at residues 58–80 (YSGS…DGCV), 81–103 (YDGE…SGAS), 104–126 (YDGE…NKLT), 127–149 (YKGR…NGDV), 150–172 (FEGS…NKNV), 173–195 (YLGD…TGDS), 196–218 (YEGS…DGGC), and 219–240 (YVGT…AGTR). Residues 391-809 (GHRSYDLMLS…RFLEFIKKVF (419 aa)) enclose the PIPK domain. The activation loop stretch occupies residues 769 to 790 (YNMTKKIEHAYKSLHFDSLSIS).

Interacts with CINV1. In terms of tissue distribution, widely expressed.

It localises to the membrane. Its subcellular location is the nucleus. It carries out the reaction a 1,2-diacyl-sn-glycero-3-phospho-(1D-myo-inositol 4-phosphate) + ATP = a 1,2-diacyl-sn-glycero-3-phospho-(1D-myo-inositol-4,5-bisphosphate) + ADP + H(+). Its function is as follows. Plays a role in sugar-mediated root development. Interaction with CINV1 induces repression of CINV1 activity and negative regulation of sugar-mediated root cell elongation. The chain is Phosphatidylinositol 4-phosphate 5-kinase 9 (PIP5K9) from Arabidopsis thaliana (Mouse-ear cress).